A 208-amino-acid chain; its full sequence is Large ribosomal subunit protein uL4 (208 aa).

Positions 54-78 are disordered; it reads RAEVSHTTKKPWNQKGTGRARAGMS.

The protein belongs to the universal ribosomal protein uL4 family. As to quaternary structure, part of the 50S ribosomal subunit.

Its function is as follows. One of the primary rRNA binding proteins, this protein initially binds near the 5'-end of the 23S rRNA. It is important during the early stages of 50S assembly. It makes multiple contacts with different domains of the 23S rRNA in the assembled 50S subunit and ribosome. Forms part of the polypeptide exit tunnel. In Methylobacillus flagellatus (strain ATCC 51484 / DSM 6875 / VKM B-1610 / KT), this protein is Large ribosomal subunit protein uL4.